A 360-amino-acid polypeptide reads, in one-letter code: Peptide chain release factor 1 (360 aa).

N5-methylglutamine is present on Gln237.

It belongs to the prokaryotic/mitochondrial release factor family. Methylated by PrmC. Methylation increases the termination efficiency of RF1.

It localises to the cytoplasm. Its function is as follows. Peptide chain release factor 1 directs the termination of translation in response to the peptide chain termination codons UAG and UAA. This is Peptide chain release factor 1 from Pseudomonas syringae pv. tomato (strain ATCC BAA-871 / DC3000).